The sequence spans 214 residues: Pyridoxine/pyridoxamine 5'-phosphate oxidase (214 aa).

Substrate-binding positions include 9-12 (RKDY) and Lys-67. FMN-binding positions include 62 to 67 (RMVLLK), 77 to 78 (FT), Arg-83, Lys-84, and Gln-106. Substrate is bound by residues Tyr-124, Arg-128, and Ser-132. FMN is bound by residues 141 to 142 (QS) and Trp-186. 192–194 (RLH) contacts substrate. An FMN-binding site is contributed by Arg-196.

This sequence belongs to the pyridoxamine 5'-phosphate oxidase family. Homodimer. Requires FMN as cofactor.

The enzyme catalyses pyridoxamine 5'-phosphate + O2 + H2O = pyridoxal 5'-phosphate + H2O2 + NH4(+). It carries out the reaction pyridoxine 5'-phosphate + O2 = pyridoxal 5'-phosphate + H2O2. The protein operates within cofactor metabolism; pyridoxal 5'-phosphate salvage; pyridoxal 5'-phosphate from pyridoxamine 5'-phosphate: step 1/1. It participates in cofactor metabolism; pyridoxal 5'-phosphate salvage; pyridoxal 5'-phosphate from pyridoxine 5'-phosphate: step 1/1. Functionally, catalyzes the oxidation of either pyridoxine 5'-phosphate (PNP) or pyridoxamine 5'-phosphate (PMP) into pyridoxal 5'-phosphate (PLP). In Trichormus variabilis (strain ATCC 29413 / PCC 7937) (Anabaena variabilis), this protein is Pyridoxine/pyridoxamine 5'-phosphate oxidase.